Consider the following 580-residue polypeptide: Probable mediator of RNA polymerase II transcription subunit 26a (580 aa).

The TFIIS N-terminal domain maps to 108 to 183 (DEVMRIRDIL…AEWKRLVDQW (76 aa)). 3 stretches are compositionally biased toward basic and acidic residues: residues 244–255 (RHSVESKHERKS), 280–290 (QTRREEADVRP), and 299–309 (VEPKRQTKQSR). Residues 244 to 337 (RHSVESKHER…RKLAGPQQDK (94 aa)) form a disordered region. Residues 347 to 368 (FEFAKRKLQESYHQHENAKRQR) are a coiled coil.

It belongs to the Mediator complex subunit 26 family. In terms of assembly, component of the Mediator complex.

Its subcellular location is the nucleus. Its function is as follows. Component of the Mediator complex, a coactivator involved in the regulated transcription of nearly all RNA polymerase II-dependent genes. Mediator functions as a bridge to convey information from gene-specific regulatory proteins to the basal RNA polymerase II transcription machinery. The Mediator complex, having a compact conformation in its free form, is recruited to promoters by direct interactions with regulatory proteins and serves for the assembly of a functional preinitiation complex with RNA polymerase II and the general transcription factors. May play a role in transcription elongation. The protein is Probable mediator of RNA polymerase II transcription subunit 26a (MED26A) of Arabidopsis thaliana (Mouse-ear cress).